The following is a 291-amino-acid chain: MMRHRVKRMMLMTTACISLLLGSAPLYAQANDVQQKLAALEKSSGGRLGVALIDTADNAQTLYRADERFAMCSTSKVMAAAAVLKQSETQKKVLSQKVEIKSSDLINYNPITEKHVNGTMTLAELSAAALQYSDNTAMNKLIAHLGGPDKVTAFARAIGDNTFRLDRTEPTLNTAIPGDPRDTTTPLAMAQTLRNLTLGSALGETQRAQLVTWLKGNTTGAASIQAGLPTSWVVGDKTGSGDYGTTNDIAVIWPEGRAPLILVTYFTQPEQKAESRRDVLAAAAKIVTDGY.

The first 30 residues, methionine 1–alanine 30, serve as a signal peptide directing secretion. The Nucleophile; acyl-ester intermediate role is filled by serine 73. A beta-lactam-binding residues include lysine 76, serine 133, glutamate 169, and serine 240.

This sequence belongs to the class-A beta-lactamase family. Monomer.

Its subcellular location is the secreted. It catalyses the reaction a beta-lactam + H2O = a substituted beta-amino acid. Its activity is regulated as follows. Inhibited by the beta-lactamase-blocking agents clavulanic acid, tazobactam and sulbactam; in the DH5alpha strain of E.coli. Functionally, extended-spectrum beta-lactamase (ESBL) which confers resistance to penicillins, as well as first, third and fourth-generation cephalosporins. Has cefotaxime-hydrolyzing activity. Inactive against cephalosporin antibiotic, cefoxitin, and the carbapenem, imipenem. The sequence is that of Beta-lactamase CTX-M-8 from Citrobacter amalonaticus.